The following is a 336-amino-acid chain: Zinc-type alcohol dehydrogenase-like protein SE_1777 (336 aa).

This sequence belongs to the zinc-containing alcohol dehydrogenase family. Quinone oxidoreductase subfamily.

The sequence is that of Zinc-type alcohol dehydrogenase-like protein SE_1777 from Staphylococcus epidermidis (strain ATCC 12228 / FDA PCI 1200).